Consider the following 349-residue polypeptide: Glycerol-3-phosphate dehydrogenase [NAD(+)], cytoplasmic (349 aa).

10–15 (GSGNWG) lines the NAD(+) pocket. Residue K120 coordinates substrate. A153 provides a ligand contact to NAD(+). S154 is modified (phosphoserine). Residue K204 is the Proton acceptor of the active site. Position 269 (R269) interacts with NAD(+). 269–270 (RN) serves as a coordination point for substrate. K289 bears the N6-succinyllysine mark. Positions 296 and 298 each coordinate NAD(+). Y326 bears the Phosphotyrosine mark.

It belongs to the NAD-dependent glycerol-3-phosphate dehydrogenase family. In terms of assembly, homodimer.

It localises to the cytoplasm. The catalysed reaction is sn-glycerol 3-phosphate + NAD(+) = dihydroxyacetone phosphate + NADH + H(+). In terms of biological role, has glycerol-3-phosphate dehydrogenase activity. This chain is Glycerol-3-phosphate dehydrogenase [NAD(+)], cytoplasmic (GPD1), found in Pongo abelii (Sumatran orangutan).